The primary structure comprises 279 residues: MRTTISQLKEMKQNKQKIAILTAYDYPTAQILDKAGIPAILVGDSLGMVVLGYDSTVSVTMEDMLHHLKAVVRGSQKALIIADMPFMTYHLSPEQALLNAGRFIQEGGAQAVKLEGGVNVADKVKRIVDCGIPVMGHIGLTPQSVNQLSGFKVQGKTLATALSLIEDAKALEKAGAFAIVLETMPAELAAIITAGISIPTIGIGAGEECDGQVQVISDMLGMFTDFVPKHTKRYADLNGSITKAVSEYAAEVTKGAFPTLKESFTLDKKVLEELKKCVL.

Mg(2+) contacts are provided by Asp-44 and Asp-83. Residues 44-45 (DS), Asp-83, and Lys-113 contribute to the 3-methyl-2-oxobutanoate site. Glu-115 contributes to the Mg(2+) binding site. Glu-182 serves as the catalytic Proton acceptor.

This sequence belongs to the PanB family. Homodecamer; pentamer of dimers. It depends on Mg(2+) as a cofactor.

It is found in the cytoplasm. The catalysed reaction is 3-methyl-2-oxobutanoate + (6R)-5,10-methylene-5,6,7,8-tetrahydrofolate + H2O = 2-dehydropantoate + (6S)-5,6,7,8-tetrahydrofolate. Its pathway is cofactor biosynthesis; (R)-pantothenate biosynthesis; (R)-pantoate from 3-methyl-2-oxobutanoate: step 1/2. In terms of biological role, catalyzes the reversible reaction in which hydroxymethyl group from 5,10-methylenetetrahydrofolate is transferred onto alpha-ketoisovalerate to form ketopantoate. The protein is 3-methyl-2-oxobutanoate hydroxymethyltransferase of Dehalococcoides mccartyi (strain CBDB1).